A 292-amino-acid polypeptide reads, in one-letter code: MGEKSENCGVPEDLLNGLKVTDTQEAECAGPPVPDPKNQHSQSKLLRDDEAHLQEDQGEEECFHDCSASFEEEPGADKVENKSNEDVNSSELDEEYLIELEKNMSDEEKQKRREESTRLKEEGNEQFKKGDYIEAESSYSRALEMCPSCFQKERSILFSNRAAARMKQDKKEMAINDCSKAIQLNPSYIRAILRRAELYEKTDKLDEALEDYKSILEKDPSIHQAREACMRLPKQIEERNERLKEEMLGKLKDLGNLVLRPFGLSTENFQIKQDSSTGSYSINFVQNPNNNR.

A disordered region spans residues 23 to 125 (TQEAECAGPP…STRLKEEGNE (103 aa)). 2 stretches are compositionally biased toward basic and acidic residues: residues 45–55 (LLRDDEAHLQE) and 75–85 (GADKVENKSNE). Phosphoserine is present on residues Ser-83 and Ser-90. Basic and acidic residues predominate over residues 99 to 125 (ELEKNMSDEEKQKRREESTRLKEEGNE). 3 TPR repeats span residues 116 to 149 (STRL…CPSC), 155 to 188 (SILF…NPSY), and 189 to 222 (IRAI…DPSI).

Interacts with the GAP domain of NF1. Interacts (via TPR repeats) with HSP90AA1 and HSPA8.

This chain is Tetratricopeptide repeat protein 1 (TTC1), found in Homo sapiens (Human).